Consider the following 231-residue polypeptide: Protein OPG061 (231 aa).

This sequence belongs to the orthopoxvirus OPG058 family.

The protein resides in the host nucleus. Its subcellular location is the host nucleolus. The chain is Protein OPG061 (OPG061) from Variola virus.